Reading from the N-terminus, the 553-residue chain is 2-succinyl-5-enolpyruvyl-6-hydroxy-3-cyclohexene-1-carboxylate synthase (553 aa).

Belongs to the TPP enzyme family. MenD subfamily. Homodimer. It depends on Mg(2+) as a cofactor. Mn(2+) serves as cofactor. Thiamine diphosphate is required as a cofactor.

It catalyses the reaction isochorismate + 2-oxoglutarate + H(+) = 5-enolpyruvoyl-6-hydroxy-2-succinyl-cyclohex-3-ene-1-carboxylate + CO2. Its pathway is quinol/quinone metabolism; 1,4-dihydroxy-2-naphthoate biosynthesis; 1,4-dihydroxy-2-naphthoate from chorismate: step 2/7. It functions in the pathway quinol/quinone metabolism; menaquinone biosynthesis. Functionally, catalyzes the thiamine diphosphate-dependent decarboxylation of 2-oxoglutarate and the subsequent addition of the resulting succinic semialdehyde-thiamine pyrophosphate anion to isochorismate to yield 2-succinyl-5-enolpyruvyl-6-hydroxy-3-cyclohexene-1-carboxylate (SEPHCHC). The polypeptide is 2-succinyl-5-enolpyruvyl-6-hydroxy-3-cyclohexene-1-carboxylate synthase (Thermobifida fusca (strain YX)).